Here is a 414-residue protein sequence, read N- to C-terminus: Enterobactin exporter EntS (414 aa).

Over 1 to 21 (MNRQSWLLNLSLLKTHPAFRA) the chain is Cytoplasmic. A helical membrane pass occupies residues 22–42 (VFLARFISIVSLGLLGVAVPV). Residues 43 to 55 (QIQMMTHSTWQVG) lie on the Periplasmic side of the membrane. The chain crosses the membrane as a helical span at residues 56–76 (LSVTLTGGAMFIGLMVGGVLA). The Cytoplasmic portion of the chain corresponds to 77 to 83 (DRYERKK). A helical transmembrane segment spans residues 84–104 (VILLARGTCGIGFIGLCVNSL). At 105-109 (LPEPS) the chain is on the periplasmic side. Residues 110 to 130 (LLAIYLLGLWDGFFASLGVTA) traverse the membrane as a helical segment. The Cytoplasmic segment spans residues 131 to 156 (LLAATPALVGRENLMQAGAITMLTVR). Residues 157–177 (LGSVISPMLGGILLASGGVAW) traverse the membrane as a helical segment. Asn-178 is a topological domain (periplasmic). A helical transmembrane segment spans residues 179–199 (YGLAAAGTFITLLPLLTLPRL). Residues 200-218 (PVPPQPRENPFIALLAAFR) are Cytoplasmic-facing. The chain crosses the membrane as a helical span at residues 219 to 239 (FLLASPLIGGIALLGGLVTMA). Residues 240 to 256 (SAVRVLYPALAMSWQMS) are Periplasmic-facing. Residues 257-277 (AAQIGLLYAAIPLGAAIGALT) traverse the membrane as a helical segment. The Cytoplasmic segment spans residues 278-287 (SGQLAHSVRP). A helical transmembrane segment spans residues 288 to 307 (GLIMLVSTVGSFLAVGLFAI). Topologically, residues 308 to 313 (MPVWTA) are periplasmic. Residues 314–336 (GVICLALFGWLSAISSLLQYTLL) form a helical membrane-spanning segment. Over 337–356 (QTQTPENMLGRMNGLWTAQN) the chain is Cytoplasmic. Residues 357–377 (VTGDAIGAALLGGLGAMMTPV) form a helical membrane-spanning segment. Position 378 (Ala-378) is a topological domain, periplasmic. A helical transmembrane segment spans residues 379 to 399 (SASVSGFGLVIIGLLLLLVLG). Topologically, residues 400–414 (ELRRFRQTPPVSDAG) are cytoplasmic.

Belongs to the major facilitator superfamily. EntS (TC 2.A.1.38) family.

It localises to the cell inner membrane. In terms of biological role, component of an export pathway for enterobactin. The protein is Enterobactin exporter EntS of Salmonella choleraesuis (strain SC-B67).